The primary structure comprises 136 residues: Large ribosomal subunit protein uL14 (136 aa).

This sequence belongs to the universal ribosomal protein uL14 family.

The sequence is that of Large ribosomal subunit protein uL14 (rpl23) from Dictyostelium discoideum (Social amoeba).